The primary structure comprises 298 residues: Transcription factor SRM1 (298 aa).

The region spanning Ser-7–Thr-62 is the SANT domain. Residues Cys-68–Ile-118 form a disordered region. The segment covering Ser-108–Ile-118 has biased composition (basic and acidic residues). Residues Asp-111 to Asn-168 enclose the HTH myb-type domain. Positions Trp-140–Phe-164 form a DNA-binding region, H-T-H motif. Polar residues predominate over residues Ile-182 to Gln-200. The tract at residues Ile-182–Ile-245 is disordered. The span at Asn-201–Ser-215 shows a compositional bias: low complexity.

In terms of tissue distribution, expressed in young seedlings, developing leaves, sepals and trichomes.

Its subcellular location is the nucleus. Functionally, transcription activator that coordinates abscisic acid (ABA) biosynthesis and signaling-related genes via binding to the specific promoter motif 5'-(A/T)AACCAT-3'. Represses ABA-mediated salt (e.g. NaCl and KCl) stress tolerance. Regulates leaf shape and promotes vegetative growth. The sequence is that of Transcription factor SRM1 from Arabidopsis thaliana (Mouse-ear cress).